The following is a 356-amino-acid chain: NADH dehydrogenase (ubiquinone) complex I, assembly factor 6 homolog (356 aa).

A mitochondrion-targeting transit peptide spans 1–41 (MIRNSGRILFNSLKNSNVKLINRNVIINSNIRLFSTSTNNT).

Belongs to the NDUFAF6 family.

It localises to the mitochondrion inner membrane. In terms of biological role, involved in the assembly of mitochondrial NADH:ubiquinone oxidoreductase complex (complex I) at early stages. The chain is NADH dehydrogenase (ubiquinone) complex I, assembly factor 6 homolog from Dictyostelium discoideum (Social amoeba).